A 527-amino-acid polypeptide reads, in one-letter code: Putative GTP-binding protein 6 (527 aa).

The Hflx-type G domain occupies 306 to 470; it reads PIISILGYTN…QVETAVMKST (165 aa). Residues 312-319, 338-342, 360-363, 429-432, and 448-450 each bind GTP; these read GYTNSGKT, FATLD, DTIG, NKID, and SAL. The Mg(2+) site is built by Thr-319 and Thr-340.

It belongs to the TRAFAC class OBG-HflX-like GTPase superfamily. HflX GTPase family. The cofactor is Mg(2+).

In Xenopus laevis (African clawed frog), this protein is Putative GTP-binding protein 6 (gtpbp6).